Here is a 203-residue protein sequence, read N- to C-terminus: ATP-dependent Clp protease proteolytic subunit 1 (203 aa).

Catalysis depends on Ser-102, which acts as the Nucleophile. His-127 is an active-site residue.

The protein belongs to the peptidase S14 family. In terms of assembly, fourteen ClpP subunits assemble into 2 heptameric rings which stack back to back to give a disk-like structure with a central cavity, resembling the structure of eukaryotic proteasomes.

It localises to the cytoplasm. The catalysed reaction is Hydrolysis of proteins to small peptides in the presence of ATP and magnesium. alpha-casein is the usual test substrate. In the absence of ATP, only oligopeptides shorter than five residues are hydrolyzed (such as succinyl-Leu-Tyr-|-NHMec, and Leu-Tyr-Leu-|-Tyr-Trp, in which cleavage of the -Tyr-|-Leu- and -Tyr-|-Trp bonds also occurs).. Cleaves peptides in various proteins in a process that requires ATP hydrolysis. Has a chymotrypsin-like activity. Plays a major role in the degradation of misfolded proteins. This is ATP-dependent Clp protease proteolytic subunit 1 from Rhizobium johnstonii (strain DSM 114642 / LMG 32736 / 3841) (Rhizobium leguminosarum bv. viciae).